A 627-amino-acid polypeptide reads, in one-letter code: Plasmepsin IX (627 aa).

Residues 1-13 lie on the Cytoplasmic side of the membrane; the sequence is MFFINFKKIKKKQ. The helical; Signal-anchor for type II membrane protein transmembrane segment at 14–34 threads the bilayer; the sequence is FPIYLTQHRIITVFLIFIYFI. Residues 35 to 627 lie on the Lumenal side of the membrane; the sequence is NLKDCFHINN…SSLHNKINNL (593 aa). Positions 228 to 605 constitute a Peptidase A1 domain; sequence YVGYIQIGTP…NNNSSYVGIA (378 aa). Residues Asp246 and Asp495 contribute to the active site.

It belongs to the peptidase A1 family. In terms of processing, autocleaved into a p55 mature form.

The protein resides in the membrane. It localises to the cytoplasmic vesicle. The protein localises to the secretory vesicle. Its subcellular location is the rhoptry. With respect to regulation, inhibited by small molecule 49c. Inhibited by small molecule WM382. During the asexual blood stage, initiates the proteolytic maturation of several rhoptry proteins and thus, is required for merozoite invasion of host erythrocytes and probably the subsequent development of the ring-stage. Cleaves rhoptry associated protein 1 RAP1 and apical sushi protein ASP during schizont maturation. Also cleaves rhoptry protein RON3. The sequence is that of Plasmepsin IX from Plasmodium falciparum (isolate 3D7).